The following is an 892-amino-acid chain: Histone deacetylase 4 (892 aa).

Residues N145 to S225 form a disordered region. Polar residues-rich tracts occupy residues S171–L192 and E208–H222. The tract at residues S481–D822 is histone deacetylase. Residue H628 is part of the active site.

The protein belongs to the histone deacetylase family. HD type 2 subfamily.

It localises to the nucleus. It catalyses the reaction N(6)-acetyl-L-lysyl-[histone] + H2O = L-lysyl-[histone] + acetate. Responsible for the deacetylation of lysine residues on the N-terminal part of the core histones (H2A, H2B, H3 and H4). Histone deacetylation gives a tag for epigenetic repression and plays an important role in transcriptional regulation, cell cycle progression and developmental events. Histone deacetylases act via the formation of large multiprotein complexes. The chain is Histone deacetylase 4 (hda-4) from Caenorhabditis briggsae.